The chain runs to 127 residues: Anti-adapter protein IraD (127 aa).

It belongs to the GpW/Gp25 family. IraD subfamily. Interacts with RssB.

Its subcellular location is the cytoplasm. Inhibits RpoS proteolysis by regulating RssB activity, thereby increasing the stability of the sigma stress factor RpoS during oxidative stress. Its effect on RpoS stability is due to its interaction with RssB, which probably blocks the interaction of RssB with RpoS, and the consequent delivery of the RssB-RpoS complex to the ClpXP protein degradation pathway. This is Anti-adapter protein IraD from Escherichia coli (strain SMS-3-5 / SECEC).